A 458-amino-acid polypeptide reads, in one-letter code: Alpha-2C adrenergic receptor (458 aa).

Residues 1 to 51 (MASPALAAALAAAAAEGPNGSDAGEWGSGGGANASGTDWVPPPGQYSAGAV) lie on the Extracellular side of the membrane. Asn19 and Asn33 each carry an N-linked (GlcNAc...) asparagine glycan. The chain crosses the membrane as a helical span at residues 52-76 (AGLAAVVGFLIVFTVVGNVLVVIAV). The Cytoplasmic portion of the chain corresponds to 77-88 (LTSRALRAPQNL). The helical transmembrane segment at 89-114 (FLVSLASADILVATLVMPFSLANELM) threads the bilayer. The Extracellular portion of the chain corresponds to 115–124 (AYWYFGQVWC). A disulfide bond links Cys124 and Cys202. Residues 125-147 (GVYLALDVLFCTSSIVHLCAISL) form a helical membrane-spanning segment. The Cytoplasmic segment spans residues 148–168 (DRYWSVTQAVEYNLKRTPRRV). Residues 169–191 (KATIVAVWLISAVISFPPLVSFY) traverse the membrane as a helical segment. Residues 192-207 (RRPDGAAYPQCGLNDE) are Extracellular-facing. Residues 208-231 (TWYILSSCIGSFFAPCLIMGLVYA) traverse the membrane as a helical segment. Residues 232 to 379 (RIYRVAKLRT…QAREKRFTFV (148 aa)) lie on the Cytoplasmic side of the membrane. The disordered stretch occupies residues 245–343 (SEKRGPAGPD…SPGPGGRLSR (99 aa)). Residues 291–303 (RRRRRGALRRGGR) show a composition bias toward basic residues. A helical membrane pass occupies residues 380 to 403 (LAVVMGVFVLCWFPFFFSYSLYGI). Over 404–416 (CREACQLPEPLFK) the chain is Extracellular. A helical transmembrane segment spans residues 417–437 (FFFWIGYCNSSLNPVIYTVFN). Topologically, residues 438-458 (QDFRRSFKHILFRRRRRGFRQ) are cytoplasmic.

Belongs to the G-protein coupled receptor 1 family. Adrenergic receptor subfamily. ADRA2C sub-subfamily.

It is found in the cell membrane. Its function is as follows. Alpha-2 adrenergic receptors mediate the catecholamine-induced inhibition of adenylate cyclase through the action of G proteins. The polypeptide is Alpha-2C adrenergic receptor (Adra2c) (Mus musculus (Mouse)).